A 383-amino-acid polypeptide reads, in one-letter code: Plant intracellular Ras-group-related LRR protein 8 (383 aa).

10 LRR repeats span residues 56 to 79 (RQNI…SINL), 80 to 102 (ASIS…LVAR), 104 to 126 (LNLW…IGCL), 127 to 149 (SKLK…IEDC), 151 to 173 (SLEE…GFEL), 174 to 197 (TNLT…SYLT), 199 to 219 (LRVL…LENL), 221 to 244 (NLQV…VGLL), 245 to 268 (ISLV…GCLR), and 270 to 290 (IQKL…VVEQ). Residues 291–298 (GLEALKQY) carry the GVYW; degenerate motif.

The protein belongs to the SHOC2 family. In terms of tissue distribution, widely expressed except flowers.

In terms of biological role, leucine-rich repeat protein that likely mediates protein interactions, possibly in the context of signal transduction. This Arabidopsis thaliana (Mouse-ear cress) protein is Plant intracellular Ras-group-related LRR protein 8 (PIRL8).